We begin with the raw amino-acid sequence, 208 residues long: Proteasome subunit beta 2 (208 aa).

Positions 1 to 14 (MGNELQLENKILKG) are cleaved as a propeptide — removed in mature form; by autocatalysis. Thr-15 (nucleophile) is an active-site residue.

The protein belongs to the peptidase T1B family. As to quaternary structure, the 20S proteasome core is composed of 14 alpha and 14 beta subunits that assemble into four stacked heptameric rings, resulting in a barrel-shaped structure. The two inner rings, each composed of seven catalytic beta subunits, are sandwiched by two outer rings, each composed of seven alpha subunits. The catalytic chamber with the active sites is on the inside of the barrel. Has a gated structure, the ends of the cylinder being occluded by the N-termini of the alpha-subunits. Is capped at one or both ends by the proteasome regulatory ATPase, PAN.

The protein localises to the cytoplasm. It carries out the reaction Cleavage of peptide bonds with very broad specificity.. Its activity is regulated as follows. The formation of the proteasomal ATPase PAN-20S proteasome complex, via the docking of the C-termini of PAN into the intersubunit pockets in the alpha-rings, triggers opening of the gate for substrate entry. Interconversion between the open-gate and close-gate conformations leads to a dynamic regulation of the 20S proteasome proteolysis activity. Functionally, component of the proteasome core, a large protease complex with broad specificity involved in protein degradation. The chain is Proteasome subunit beta 2 from Saccharolobus solfataricus (strain ATCC 35092 / DSM 1617 / JCM 11322 / P2) (Sulfolobus solfataricus).